The primary structure comprises 331 residues: Glyceraldehyde-3-phosphate dehydrogenase 3 (331 aa).

NAD(+)-binding positions include 11–12 (RI), D33, and E77. S148 is modified (phosphoserine). D-glyceraldehyde 3-phosphate is bound at residue 148 to 150 (SCT). The Nucleophile role is filled by C149. S177 bears the Phosphoserine mark. Residue T179 participates in D-glyceraldehyde 3-phosphate binding. At S200 the chain carries Phosphoserine. D-glyceraldehyde 3-phosphate-binding positions include 208 to 209 (TG) and R231. N313 serves as a coordination point for NAD(+).

The protein belongs to the glyceraldehyde-3-phosphate dehydrogenase family. Homotetramer.

The protein resides in the cytoplasm. It catalyses the reaction D-glyceraldehyde 3-phosphate + phosphate + NAD(+) = (2R)-3-phospho-glyceroyl phosphate + NADH + H(+). The protein operates within carbohydrate degradation; glycolysis; pyruvate from D-glyceraldehyde 3-phosphate: step 1/5. This is Glyceraldehyde-3-phosphate dehydrogenase 3 from Kluyveromyces marxianus (Yeast).